The chain runs to 375 residues: Meiotic driver cw27 (375 aa).

Disordered regions lie at residues 1 to 42 (MKNK…STLP) and 74 to 103 (DYDENRLLITDEGNNPPNTHRENHSSGTTD). Over residues 11–29 (SMDELSTKNDNEIDLEKGP) the composition is skewed to basic and acidic residues. Transmembrane regions (helical) follow at residues 108–128 (FLIKLLISFTSIILFNAPAVC), 145–165 (WTLIGFWCASSLIIFTFSWCF), 172–192 (AVKVTVIFLAQCIKVTAISLA), 208–228 (EMMIIIWILWLIICCILFGCV), 245–265 (TISAVLFLIVSSVCIPIWTLW), 272–292 (LQVLGIHGIIALLVNGLMSLF), and 336–356 (VIGFILGGIANAIGGIANAIG).

This sequence belongs to the WTF family. In terms of assembly, homomer. Forms protein aggregates. The two isoforms can interact with each other and with themselves. High sequence similarity is required for their interaction.

The protein localises to the spore membrane. It localises to the vacuole. It is found in the membrane. The protein resides in the ascus epiplasm. Its subcellular location is the cytoplasm. The protein localises to the endoplasmic reticulum. Its function is as follows. Promotes unequal transmission of alleles from the parental zygote to progeny spores by acting as poison/antidote system where the poison and antidote proteins are produced from the same locus; the poison component is trans-acting and targets all spores within an ascus whereas the antidote component is spore-specific, leading to poisoning of all progeny that do not inherit the allele. In terms of biological role, localizes isoform 2 to the vacuole thereby facilitating its degradation. Functionally, forms toxic aggregates that disrupt spore maturation. This chain is Meiotic driver cw27, found in Schizosaccharomyces pombe (Fission yeast).